The primary structure comprises 353 residues: MKKTLAALIVGAFAASAANAAVVYNNEGTKVELGGRVSIIAEQSTSNRKDQKHQHGSLRNQGSRFNIKVTHNLGDGYYALGYYETRFINKDIDGNEKNIGSGFGSITTKLAYAGLGNKELGEATFGLQKTIADKISTAEDKEYGVIEKNSYIPTEGNAIAYTYKGIEGLTLGASYVFGGRNFSDYEITDGKVSNAVQVGAKYDANNIVAGFAYGRTNYKAQQAKTQQVNGALATLGYHFDDLGLLISLDSGYAKTKNKADKHEKRYFVSPGFQYELMEDTNLYGNLKYERINSVDQGEKVREHAVLFGIDHKLHKQVLTYIEGAYARTRTNDKGKTEKTEKEKSVGVGLRVYF.

The N-terminal stretch at 1–20 is a signal peptide; that stretch reads MKKTLAALIVGAFAASAANA.

The protein belongs to the Gram-negative porin family. As to quaternary structure, homotrimer.

The protein resides in the cell outer membrane. Its function is as follows. Forms pores that allow passive diffusion of small molecules across the outer membrane. The polypeptide is Outer membrane protein P2 (ompP2) (Haemophilus influenzae).